Reading from the N-terminus, the 339-residue chain is tRNA N6-adenosine threonylcarbamoyltransferase (339 aa).

2 residues coordinate Fe cation: His-111 and His-115. Substrate-binding positions include 134–138 (LVSGG), Asp-167, Gly-180, and Asn-270. Asp-298 serves as a coordination point for Fe cation.

It belongs to the KAE1 / TsaD family. Requires Fe(2+) as cofactor.

The protein localises to the cytoplasm. The enzyme catalyses L-threonylcarbamoyladenylate + adenosine(37) in tRNA = N(6)-L-threonylcarbamoyladenosine(37) in tRNA + AMP + H(+). In terms of biological role, required for the formation of a threonylcarbamoyl group on adenosine at position 37 (t(6)A37) in tRNAs that read codons beginning with adenine. Is involved in the transfer of the threonylcarbamoyl moiety of threonylcarbamoyl-AMP (TC-AMP) to the N6 group of A37, together with TsaE and TsaB. TsaD likely plays a direct catalytic role in this reaction. The sequence is that of tRNA N6-adenosine threonylcarbamoyltransferase from Alkalilimnicola ehrlichii (strain ATCC BAA-1101 / DSM 17681 / MLHE-1).